The chain runs to 32 residues: Snaclec (32 aa).

As to quaternary structure, dimer; disulfide-linked. In terms of tissue distribution, expressed by the venom gland.

Its subcellular location is the secreted. Interferes with one step of hemostasis (modulation of platelet aggregation, or coagulation cascade, for example). The sequence is that of Snaclec from Bothrops diporus (Chaco lancehead).